We begin with the raw amino-acid sequence, 102 residues long: Small ribosomal subunit protein uS10 (102 aa).

Belongs to the universal ribosomal protein uS10 family. Part of the 30S ribosomal subunit.

In terms of biological role, involved in the binding of tRNA to the ribosomes. This Opitutus terrae (strain DSM 11246 / JCM 15787 / PB90-1) protein is Small ribosomal subunit protein uS10.